We begin with the raw amino-acid sequence, 155 residues long: MSSVDEDLTPEQIAVLQKAFNSFDHQKTGSIPTEMVADILRLMGQPFDKKILEELIEEVDEDKSGRLEFGEFVQLAAKFIVEEDAEAMQKELREAFRLYDKQGNGFIPTTCLKEILKELDDQLTEQELDIMIEEIDSDGSGTVDFDEFMEMMTGE.

4 consecutive EF-hand domains span residues 11–46, 47–82, 87–122, and 123–155; these read EQIA…MGQP, FDKK…FIVE, AMQK…LDDQ, and LTEQ…MTGE. The Ca(2+) site is built by Asp-60, Asp-62, Ser-64, Arg-66, and Glu-71. Residues Asp-136, Asp-138, Ser-140, Thr-142, and Glu-147 each contribute to the Ca(2+) site.

The protein belongs to the troponin C family. As to expression, present in both larval and adult muscles.

The sequence is that of Troponin C, isoform 3 (TpnC73F) from Drosophila melanogaster (Fruit fly).